We begin with the raw amino-acid sequence, 369 residues long: uncharacterized protein (369 aa).

Positions 1 to 35 (MQTNNPSYFFRSESALQDEKRKEEKSHNPNGNPRN) are disordered. The span at 17-27 (QDEKRKEEKSH) shows a compositional bias: basic and acidic residues. WD repeat units follow at residues 83-127 (GHSG…CVET), 130-169 (GHTD…SRLL), 174-213 (GHSR…GSQL), 220-260 (GHQS…HEET), 263-301 (EHPD…VKDI), and 304-341 (GHYE…DNNE).

This is an uncharacterized protein from Schizosaccharomyces pombe (strain 972 / ATCC 24843) (Fission yeast).